We begin with the raw amino-acid sequence, 816 residues long: MESGCGLGTLCLLLCLGPVVGFGVDPSLQIDVLSELGLPGYAAGVRQVPGLHNGSKAFLFPDTSRSVKASPETAEIFFQKLRNKYEFTILVTLKQAHLNSGVIFSIHHLDHRYLELESSGHRNEIRLHYRTGSHRSHTEVFPYILADDKWHRLSLAISASHLILHVDCNKIYERVVEKPFMDLPVGTTFWLGQRNNAHGYFKGIMQDVQLLVMPQGFISQCPDLNRTCPTCNDFHGLVQKIMELQDILAKTSAKLSQAEQRMNKLDQCYCERTCTMKGMTYREFESWTDGCKNCTCMNGTVQCEALICSLSDCPPNSALSYVDGKCCKECQSVCIFEGRTYFEGQRETVYSSSGDCVLFECKDHKMQRIPKDSCATLNCPESQQIPLSHSCCKICKGHDFCTEGHNCMEHSVCRNLDDRAVCSCRDGFRALREDNAYCEDVDECAEGQHYCRENTMCVNTPGSFMCICKTGYIRIDDYSCTEHDECVTNQHNCDENALCFNTVGGHNCVCKLGYTGNGTVCKAFCKDGCRNGGACIASNVCACPQGFTGPSCETDIDECSDGFVQCDSRANCINLPGWYHCECRDGYHDNGMFSPSGESCEDIDECATGRHSCANDTVCFNLDGGYDCRCPHGKNCTGDCIHEDKIKHNGQIWVLENDRCSVCSCQSGYVMCRRMVCDCENPTVDLFCCPECDPRLSSQCLHQSGELSYNSGDSWIQNCQQCRCLQGEVDCWPLPCPEVDCEFSVLPENECCPRCVTDPCQADTIRNDITKTCLDETNVVRFTGSSWIKHGTECTLCQCKNGHVCCSVDPQCLQEL.

Positions 1-21 (MESGCGLGTLCLLLCLGPVVG) are cleaved as a signal peptide. Asparagine 53, asparagine 225, asparagine 293, and asparagine 298 each carry an N-linked (GlcNAc...) asparagine glycan. Positions 65–228 (RSVKASPETA…SQCPDLNRTC (164 aa)) constitute a Laminin G-like domain. Residues 272–331 (RTCTMKGMTYREFESWTDGCKNCTCMNGTVQCEALICSLSDCPPNSALSYVDGKCCKECQ) enclose the VWFC 1 domain. The 43-residue stretch at 397–439 (GHDFCTEGHNCMEHSVCRNLDDRAVCSCRDGFRALREDNAYCE) folds into the EGF-like 1 domain. 18 cysteine pairs are disulfide-bonded: cysteine 401-cysteine 413, cysteine 407-cysteine 422, cysteine 424-cysteine 438, cysteine 444-cysteine 457, cysteine 451-cysteine 466, cysteine 468-cysteine 480, cysteine 486-cysteine 499, cysteine 493-cysteine 508, cysteine 510-cysteine 521, cysteine 525-cysteine 535, cysteine 529-cysteine 541, cysteine 543-cysteine 552, cysteine 559-cysteine 572, cysteine 566-cysteine 581, cysteine 583-cysteine 600, cysteine 606-cysteine 619, cysteine 613-cysteine 628, and cysteine 630-cysteine 636. One can recognise an EGF-like 2; calcium-binding domain in the interval 440-481 (DVDECAEGQHYCRENTMCVNTPGSFMCICKTGYIRIDDYSCT). An EGF-like 3; calcium-binding domain is found at 482-522 (EHDECVTNQHNCDENALCFNTVGGHNCVCKLGYTGNGTVCK). Asparagine 517 carries an N-linked (GlcNAc...) asparagine glycan. One can recognise an EGF-like 4 domain in the interval 523–553 (AFCKDGCRNGGACIASNVCACPQGFTGPSCE). Residues 555–601 (DIDECSDGFVQCDSRANCINLPGWYHCECRDGYHDNGMFSPSGESCE) enclose the EGF-like 5; calcium-binding domain. The EGF-like 6; calcium-binding domain occupies 602-637 (DIDECATGRHSCANDTVCFNLDGGYDCRCPHGKNCT). N-linked (GlcNAc...) asparagine glycosylation is found at asparagine 615 and asparagine 635. 2 consecutive VWFC domains span residues 638-693 (GDCI…PECD) and 698-756 (SQCL…PRCV).

In terms of tissue distribution, strongly expressed in early embryonic neural tissues (brain, spinal cord, dorsal root ganglia); less in other tissues such as cells around cartilage, myocardium, lung mesenchymal cells, and liver. After hatching expression is restricted to neural tissues including retina.

The protein is Protein NEL (NEL) of Gallus gallus (Chicken).